A 433-amino-acid polypeptide reads, in one-letter code: Urokinase-type plasminogen activator (433 aa).

The first 20 residues, 1–20 (MKVWLASLFLCALVVKNSEG), serve as a signal peptide directing secretion. The EGF-like domain occupies 28-64 (DESNCGCQNGGVCVSYKYFSRIRRCSCPRKFQGEHCE). Intrachain disulfides connect Cys32–Cys40, Cys34–Cys52, Cys54–Cys63, Cys71–Cys152, Cys92–Cys134, and Cys123–Cys147. The binds urokinase plasminogen activator surface receptor stretch occupies residues 35-58 (QNGGVCVSYKYFSRIRRCSCPRKF). In terms of domain architecture, Kringle spans 71 to 152 (CYHGNGDSYR…FVQECMVHDC (82 aa)). Residues 153–179 (SLSKKPSSSVDQQGFQCGQKALRPRFK) are connecting peptide. At Ser159 the chain carries Phosphoserine. Intrachain disulfides connect Cys169–Cys301, Cys211–Cys227, Cys219–Cys290, Cys315–Cys384, Cys347–Cys363, and Cys374–Cys402. The Peptidase S1 domain maps to 180–426 (IVGGEFTEVE…FLDWIQSHIG (247 aa)). Catalysis depends on charge relay system residues His226 and Asp277. Ser378 functions as the Charge relay system in the catalytic mechanism.

The protein belongs to the peptidase S1 family. As to quaternary structure, found in high and low molecular mass forms. Each consists of two chains, A and B. The high molecular mass form contains a long chain A which is cleaved to yield a short chain A. Forms heterodimer with SERPINA5. Binds LRP1B; binding is followed by internalization and degradation. Interacts with MRC2. Interacts with PLAUR. In complex with SERPINE1, interacts with PLAUR/uPAR. Interacts with SORL1 and LRP1, either alone or in complex with SERPINE1; these interactions are abolished in the presence of LRPAP1/RAP. The ternary complex composed of PLAUR-PLAU-PAI1 also interacts with SORLA. In terms of processing, produced as an inactive single-chain protein (pro-uPA or sc-uPA), is processed into the active disulfide-linked two-chain form of PLAU/uPA by a proteolytic event mediated, at least, by TMPRSS4.

Its subcellular location is the secreted. It carries out the reaction Specific cleavage of Arg-|-Val bond in plasminogen to form plasmin.. Inhibited by SERPINA5. Inhibited by SERPINE1. In terms of biological role, specifically cleaves the zymogen plasminogen to form the active enzyme plasmin. This chain is Urokinase-type plasminogen activator (Plau), found in Mus musculus (Mouse).